We begin with the raw amino-acid sequence, 412 residues long: Divalent metal cation transporter MntH (412 aa).

The next 10 helical transmembrane spans lie at 19–39 (LSLM…GNFA), 46–66 (AAYG…AMLI), 98–118 (WVQA…GAAI), 122–142 (LLLG…TFLI), 155–175 (MVIG…LVFS), 196–216 (AVLL…IYLH), 241–261 (IAMT…AAAF), 286–306 (AAAV…TVVG), 348–368 (VLVL…VPLL), and 392–412 (LIVV…MSGI).

It belongs to the NRAMP family.

The protein localises to the cell inner membrane. Its function is as follows. H(+)-stimulated, divalent metal cation uptake system. This Pectobacterium carotovorum subsp. carotovorum (strain PC1) protein is Divalent metal cation transporter MntH.